The following is a 31-amino-acid chain: Bacteriocin lactocin-705 (31 aa).

Antibacterial activity against several lactic acid bacteria, Listeria, Streptococci, etc. The chain is Bacteriocin lactocin-705 from Lacticaseibacillus paracasei (Lactobacillus paracasei).